We begin with the raw amino-acid sequence, 343 residues long: KRR1 small subunit processome component homolog (343 aa).

Residues 125–193 (DIIKIGNLVH…VRDIVVETMN (69 aa)) form the KH domain. Basic residues predominate over residues 232-245 (NISKRKQPKVKKAK). Residues 232–343 (NISKRKQPKV…KLLKANKKKV (112 aa)) are disordered. Positions 270–302 (FLNKEQKQAKRQQERSAKQADAAKRQDERRNKD) form a coiled coil. The segment covering 271 to 302 (LNKEQKQAKRQQERSAKQADAAKRQDERRNKD) has biased composition (basic and acidic residues). Positions 331–343 (LKAKLLKANKKKV) are enriched in basic residues.

Belongs to the KRR1 family. Monomer. Component of the ribosomal small subunit (SSU) processome.

The protein localises to the nucleus. It localises to the nucleolus. Required for 40S ribosome biogenesis. Involved in nucleolar processing of pre-18S ribosomal RNA and ribosome assembly. Binds to RNA. Required for female germline development, cell viability during eye development and for survival of dividing cells and epithelial cells during early wing disk development. This Drosophila ananassae (Fruit fly) protein is KRR1 small subunit processome component homolog.